Here is a 392-residue protein sequence, read N- to C-terminus: Y' element ATP-dependent helicase YFL066C (392 aa).

A Helicase ATP-binding domain is found at 1–175 (MADTPSVAVQ…LQRIGLTGLA (175 aa)). Residue 11 to 18 (APPGYGKT) coordinates ATP. In terms of domain architecture, Helicase C-terminal spans 232-381 (KLLLALFEIE…EFYGLESKKG (150 aa)).

It belongs to the helicase family. Yeast subtelomeric Y' repeat subfamily.

Functionally, catalyzes DNA unwinding and is involved in telomerase-independent telomere maintenance. The sequence is that of Y' element ATP-dependent helicase YFL066C from Saccharomyces cerevisiae (strain ATCC 204508 / S288c) (Baker's yeast).